The chain runs to 1071 residues: Exportin-1 (1071 aa).

The necessary for HTLV-1 Rex-mediated mRNA export stretch occupies residues 1 to 679 (MPAIMTMLAD…QQATKNVDIL (679 aa)). Residues 46 to 112 (AQEVLTHLKE…KKYVVGLIIK (67 aa)) enclose the Importin N-terminal domain. HEAT repeat units follow at residues 217 to 240 (QNAP…PLGY), 241 to 277 (IFET…VSVS), 354 to 472 (MLLV…YVDT), 515 to 553 (RFLV…QYPR), 560 to 597 (KFLK…KCRR), and 602 to 639 (VQVG…AVGY). The tract at residues 327 to 450 (CTFLKEHDQL…VREFMKDTDS (124 aa)) is interaction with Ran and nuclear export complex formation. Serine 391 carries the post-translational modification Phosphoserine. The tract at residues 411 to 414 (PMLF) is necessary for HTLV-1 Rex multimerization. The tract at residues 411-481 (PMLFKVRLLM…TERIMTEKLH (71 aa)) is interaction with RANBP3. Lysine 446 is subject to N6-acetyllysine. Threonine 448 carries the post-translational modification Phosphothreonine. Residue serine 450 is modified to Phosphoserine. Tyrosine 454 bears the Phosphotyrosine mark. An N6-acetyllysine modification is found at lysine 693. HEAT repeat units lie at residues 775 to 813 (NFVP…KLGG), 885 to 916 (TMRN…SFYQ), 917 to 954 (TYFC…NLVE), and 1002 to 1039 (FSLN…EERE). The interval 800–820 (VLSTMAIIVNKLGGHITAEIP) is interaction with HIV-1 Rev. Position 1031 is a phosphoserine (serine 1031).

It belongs to the exportin family. As to quaternary structure, found in a U snRNA export complex with PHAX/RNUXA, NCBP1/CBP80, NCBP2/CBP20, RAN, XPO1 and m7G-capped RNA. Component of a nuclear export receptor complex composed of KPNB1, RAN, SNUPN and XPO1. Found in a trimeric export complex with SNUPN, RAN and XPO1. Found in a nuclear export complex with RANBP3 and RAN. Found in a 60S ribosomal subunit export complex with NMD3, RAN, XPO1. Interacts with DDX3X, NMD3, NUP42, NUP88, NUP214, RANBP3 and TERT. Interacts with NEMF (via its N-terminus). Interacts with the monomeric form of BIRC5/survivin deacetylated at 'Lys-129'. Interacts with DTNBP1 and SERTAD2; the interactions translocate DTNBP1 and SERTAD2 out of the nucleus. Interacts with ATF2. Interacts with SLC35G1 and STIM1. Interacts with DCAF8. Interacts with CPEB3. Interacts with HAX1. Interacts with BOK; translocates to the cytoplasm. Interacts with HSP90AB1. Interacts with LRPPRC; interacts with LRPPRC alone and also when LRPPRC is in complex with EIF4E and with EIF4E sensitivity element (4ESE)-containing mRNAs to form an EIF4E-dependent mRNA export complex. (Microbial infection) Interacts with HIV-1 Rev. In terms of assembly, (Microbial infection) Interacts with HTLV-1 Rex. As to quaternary structure, (Microbial infection) Interacts with influenza A nucleoprotein. (Microbial infection) Interacts with Epstein-Barr virus protein BMLF1. In terms of assembly, (Microbial infection) Part of a tetrameric complex composed of CRM1, importin alpha/beta dimer and the Venezuelan equine encephalitis virus (VEEV) capsid; this complex blocks the receptor-mediated transport through the nuclear pore. As to quaternary structure, (Microbial infection) Interacts with SARS-CoV virus protein ORF9b; this interaction mediates protein ORF9b export out of the nucleus. In terms of tissue distribution, expressed in heart, brain, placenta, lung, liver, skeletal muscle, pancreas, spleen, thymus, prostate, testis, ovary, small intestine, colon and peripheral blood leukocytes. Not expressed in the kidney.

The protein resides in the cytoplasm. The protein localises to the nucleus. It localises to the nucleoplasm. Its subcellular location is the cajal body. It is found in the nucleolus. Functionally, mediates the nuclear export of cellular proteins (cargos) bearing a leucine-rich nuclear export signal (NES) and of RNAs. In the nucleus, in association with RANBP3, binds cooperatively to the NES on its target protein and to the GTPase RAN in its active GTP-bound form (Ran-GTP). Docking of this complex to the nuclear pore complex (NPC) is mediated through binding to nucleoporins. Upon transit of a nuclear export complex into the cytoplasm, disassembling of the complex and hydrolysis of Ran-GTP to Ran-GDP (induced by RANBP1 and RANGAP1, respectively) cause release of the cargo from the export receptor. The directionality of nuclear export is thought to be conferred by an asymmetric distribution of the GTP- and GDP-bound forms of Ran between the cytoplasm and nucleus. Involved in U3 snoRNA transport from Cajal bodies to nucleoli. Binds to late precursor U3 snoRNA bearing a TMG cap. (Microbial infection) Mediates the export of unspliced or incompletely spliced RNAs out of the nucleus from different viruses including HIV-1, HTLV-1 and influenza A. Interacts with, and mediates the nuclear export of HIV-1 Rev and HTLV-1 Rex proteins. Involved in HTLV-1 Rex multimerization. This Homo sapiens (Human) protein is Exportin-1 (XPO1).